The sequence spans 349 residues: Hydroxymethylglutaryl-CoA synthase (349 aa).

2 residues coordinate (3S)-3-hydroxy-3-methylglutaryl-CoA: Asp-29 and Ala-30. Glu-81 acts as the Proton donor/acceptor in catalysis. (3S)-3-hydroxy-3-methylglutaryl-CoA is bound by residues Cys-113 and Thr-154. The active-site Acyl-thioester intermediate is the Cys-113. Arg-202 contributes to the CoA binding site. (3S)-3-hydroxy-3-methylglutaryl-CoA is bound by residues Thr-204 and His-237. The active-site Proton donor/acceptor is His-237. Lys-242 lines the CoA pocket. Arg-246, Asn-269, and Ser-299 together coordinate (3S)-3-hydroxy-3-methylglutaryl-CoA.

The protein belongs to the thiolase-like superfamily. Archaeal HMG-CoA synthase family. Interacts with acetoacetyl-CoA thiolase that catalyzes the precedent step in the pathway and with a DUF35 protein. The acetoacetyl-CoA thiolase/HMG-CoA synthase complex channels the intermediate via a fused CoA-binding site, which allows for efficient coupling of the endergonic thiolase reaction with the exergonic HMGCS reaction.

The enzyme catalyses acetoacetyl-CoA + acetyl-CoA + H2O = (3S)-3-hydroxy-3-methylglutaryl-CoA + CoA + H(+). Its pathway is metabolic intermediate biosynthesis; (R)-mevalonate biosynthesis; (R)-mevalonate from acetyl-CoA: step 2/3. Functionally, catalyzes the condensation of acetyl-CoA with acetoacetyl-CoA to form 3-hydroxy-3-methylglutaryl-CoA (HMG-CoA). Functions in the mevalonate (MVA) pathway leading to isopentenyl diphosphate (IPP), a key precursor for the biosynthesis of isoprenoid compounds that are building blocks of archaeal membrane lipids. The chain is Hydroxymethylglutaryl-CoA synthase from Methanococcoides burtonii (strain DSM 6242 / NBRC 107633 / OCM 468 / ACE-M).